Consider the following 98-residue polypeptide: NADH-ubiquinone oxidoreductase chain 4L (98 aa).

3 helical membrane-spanning segments follow: residues 1–21 (MSLTYMNILVAFVISLTGLLM), 29–49 (SLLCLEGMMLSLFVMVTITIL), and 61–81 (IILLVFAACEAALGLALLVMV).

It belongs to the complex I subunit 4L family. In terms of assembly, core subunit of respiratory chain NADH dehydrogenase (Complex I) which is composed of 45 different subunits.

It is found in the mitochondrion inner membrane. The catalysed reaction is a ubiquinone + NADH + 5 H(+)(in) = a ubiquinol + NAD(+) + 4 H(+)(out). Functionally, core subunit of the mitochondrial membrane respiratory chain NADH dehydrogenase (Complex I) which catalyzes electron transfer from NADH through the respiratory chain, using ubiquinone as an electron acceptor. Part of the enzyme membrane arm which is embedded in the lipid bilayer and involved in proton translocation. In Mystacina tuberculata (New Zealand lesser short-tailed bat), this protein is NADH-ubiquinone oxidoreductase chain 4L (MT-ND4L).